Reading from the N-terminus, the 91-residue chain is Probable Fe(2+)-trafficking protein (91 aa).

Belongs to the Fe(2+)-trafficking protein family. In terms of assembly, monomer.

Functionally, could be a mediator in iron transactions between iron acquisition and iron-requiring processes, such as synthesis and/or repair of Fe-S clusters in biosynthetic enzymes. This Klebsiella pneumoniae subsp. pneumoniae (strain ATCC 700721 / MGH 78578) protein is Probable Fe(2+)-trafficking protein.